An 82-amino-acid polypeptide reads, in one-letter code: Cytochrome b559 subunit alpha (82 aa).

The chain crosses the membrane as a helical span at residues 21 to 35 (VIHSITVPALFIAGW). Histidine 23 contacts heme.

It belongs to the PsbE/PsbF family. Heterodimer of an alpha subunit and a beta subunit. PSII is composed of 1 copy each of membrane proteins PsbA, PsbB, PsbC, PsbD, PsbE, PsbF, PsbH, PsbI, PsbJ, PsbK, PsbL, PsbM, PsbT, PsbX, PsbY, PsbZ, Psb30/Ycf12, at least 3 peripheral proteins of the oxygen-evolving complex and a large number of cofactors. It forms dimeric complexes. Heme b is required as a cofactor.

It localises to the plastid. It is found in the chloroplast thylakoid membrane. This b-type cytochrome is tightly associated with the reaction center of photosystem II (PSII). PSII is a light-driven water:plastoquinone oxidoreductase that uses light energy to abstract electrons from H(2)O, generating O(2) and a proton gradient subsequently used for ATP formation. It consists of a core antenna complex that captures photons, and an electron transfer chain that converts photonic excitation into a charge separation. The polypeptide is Cytochrome b559 subunit alpha (Chlamydomonas reinhardtii (Chlamydomonas smithii)).